Consider the following 456-residue polypeptide: Protein FAM124B (456 aa).

The disordered stretch occupies residues 262–313 (NGCLRGDTHPQDSSLNSVSTQRTLEPRSRRRSRSRRFKVHSLELPQPSGSWE). A compositionally biased stretch (polar residues) spans 272 to 284 (QDSSLNSVSTQRT). Residues 289–300 (SRRRSRSRRFKV) show a composition bias toward basic residues.

It belongs to the FAM124 family. Interacts with CHD7 and CHD8. Expressed strongly in lung, at slightly lower levels in heart, kidney, brain and testis, and weakly in liver (at protein level). In brain, highly expressed in cortex, hippocampus, dentate gyrus, caudate putamen and cerebellum (at protein level).

The protein resides in the nucleus. In Mus musculus (Mouse), this protein is Protein FAM124B (Fam124b).